The chain runs to 356 residues: S-adenosylmethionine:tRNA ribosyltransferase-isomerase (356 aa).

It belongs to the QueA family. As to quaternary structure, monomer.

The protein localises to the cytoplasm. The catalysed reaction is 7-aminomethyl-7-carbaguanosine(34) in tRNA + S-adenosyl-L-methionine = epoxyqueuosine(34) in tRNA + adenine + L-methionine + 2 H(+). It functions in the pathway tRNA modification; tRNA-queuosine biosynthesis. Functionally, transfers and isomerizes the ribose moiety from AdoMet to the 7-aminomethyl group of 7-deazaguanine (preQ1-tRNA) to give epoxyqueuosine (oQ-tRNA). The polypeptide is S-adenosylmethionine:tRNA ribosyltransferase-isomerase (Escherichia coli O8 (strain IAI1)).